The chain runs to 254 residues: 5-keto-D-gluconate 5-reductase (254 aa).

Residue 13 to 37 (LITGSAQGIGFLLATGLGKYGAQII) coordinates NADP(+). S145 is a binding site for substrate. Y158 acts as the Proton acceptor in catalysis.

This sequence belongs to the short-chain dehydrogenases/reductases (SDR) family.

The catalysed reaction is D-gluconate + NAD(+) = 5-dehydro-D-gluconate + NADH + H(+). The enzyme catalyses D-gluconate + NADP(+) = 5-dehydro-D-gluconate + NADPH + H(+). It participates in carbohydrate acid metabolism; L-idonate degradation. Its function is as follows. Catalyzes the reduction of 5-keto-D-gluconate to D-gluconate, using either NADH or NADPH. Is likely involved in an L-idonate degradation pathway that allows E.coli to utilize L-idonate as the sole carbon and energy source. Is also able to catalyze the reverse reaction in vitro, but the D-gluconate oxidation by the enzyme can only proceed with NAD. This Escherichia coli O6:H1 (strain CFT073 / ATCC 700928 / UPEC) protein is 5-keto-D-gluconate 5-reductase.